We begin with the raw amino-acid sequence, 461 residues long: MTTAKSGTTIEIIGAVVDVEFPRHAVPKVYDALQVDENNLTLEVQQQLGDGVVRTIAMGSTEGLKRDIAVKNTEKPIEVPVGKETLGRIMNVLGEPIDELGPINSKEKLPIHRPAPSFIEQSGATELLETGIKVVDLLCPFAKGGKVGLFGGAGVGKTVNMMELIRNIAIEHSGYSVFAGVGERTREGNDFYHEMKESNVLDKVALVYGQMNEPPGNRLRVGLTGLTLAEAFRDEGRDVLLFIDNIFRYTLAGVEVSALLGRMPSAVGYQPTLAEEMGALQERITSTKKGSITSIQAVYVPADDLTDPSPATTFAHLDATVVLSRQIAERGIYPAIDPLDSTSRQLDPLIIGEEHYRVARGVQETLQRYEELKDIIAILGMDELSEDDKRAVRRARKIQRFLSQPFFVAEVFTGAPGKYVSLQDTIRGFKGIINGEYDELPEQAFYMVGSIEEAVEKAKSL.

An ATP-binding site is contributed by Gly-151–Thr-158.

This sequence belongs to the ATPase alpha/beta chains family. F-type ATPases have 2 components, CF(1) - the catalytic core - and CF(0) - the membrane proton channel. CF(1) has five subunits: alpha(3), beta(3), gamma(1), delta(1), epsilon(1). CF(0) has three main subunits: a(1), b(2) and c(9-12). The alpha and beta chains form an alternating ring which encloses part of the gamma chain. CF(1) is attached to CF(0) by a central stalk formed by the gamma and epsilon chains, while a peripheral stalk is formed by the delta and b chains.

Its subcellular location is the cell inner membrane. The enzyme catalyses ATP + H2O + 4 H(+)(in) = ADP + phosphate + 5 H(+)(out). Produces ATP from ADP in the presence of a proton gradient across the membrane. The catalytic sites are hosted primarily by the beta subunits. The protein is ATP synthase subunit beta of Coxiella burnetii (strain Dugway 5J108-111).